Here is a 459-residue protein sequence, read N- to C-terminus: Serine/threonine-protein kinase 12 (459 aa).

The tract at residues M1–S30 is disordered. ANK repeat units lie at residues D42–Y71, D75–P104, and W108–M137. Residues V102–L417 form the Protein kinase domain. Residues W108–A116 and K184 each bind ATP. The Proton acceptor role is filled by D281.

Belongs to the protein kinase superfamily. Ser/Thr protein kinase family. Interacts with BLUS1, PHOT1 and PHOT2. In terms of tissue distribution, accumulates in leaves, stems, petioles and roots, especially in guard cells.

It is found in the cytoplasm. It localises to the cytosol. It catalyses the reaction L-seryl-[protein] + ATP = O-phospho-L-seryl-[protein] + ADP + H(+). The enzyme catalyses L-threonyl-[protein] + ATP = O-phospho-L-threonyl-[protein] + ADP + H(+). In terms of biological role, serine/threonine protein kinase that phosphorylates proteins on serine and threonine residues. Mediates blue light-dependent stomatal opening in guard cells by promoting plasma membrane-type ATPases (AHA1 and AHA2) phosphorylation. This is Serine/threonine-protein kinase 12 from Arabidopsis thaliana (Mouse-ear cress).